A 329-amino-acid polypeptide reads, in one-letter code: Taste receptor type 2 member 102 (329 aa).

The Extracellular segment spans residues 1–9 (MNMESVLHN). A helical transmembrane segment spans residues 10–30 (FATVLIYVEFIFGNLSNGFIV). Residues 31 to 47 (LSNFLDWVIKQKLSLID) lie on the Cytoplasmic side of the membrane. Residues 48 to 68 (KILLTLAISRITLIWEIYAWF) traverse the membrane as a helical segment. The Extracellular portion of the chain corresponds to 69-85 (KSLYDPSSFLIGIEFQI). Residues 86-108 (IYFSWVLSSHFSLWLATTLSVFY) form a helical membrane-spanning segment. Residues 109 to 129 (LLRIANCSWQIFLYLKWRLKQ) are Cytoplasmic-facing. Residues 130-150 (LIVGMLLGSLVFLLGNLMQSM) traverse the membrane as a helical segment. Residues 151-181 (LEERFYQYGRNTSVNTMSNDLAMWTELIFFN) lie on the Extracellular side of the membrane. A glycan (N-linked (GlcNAc...) asparagine) is linked at Asn-161. The helical transmembrane segment at 182–202 (MAMFSVIPFTLALISFLLLIF) threads the bilayer. The Cytoplasmic portion of the chain corresponds to 203–231 (SLWKHLQKMQLISRRHRDPSTKAHMNALR). Residues 232–252 (IMVSFLLLYTMHFLSLLISWI) form a helical membrane-spanning segment. Residues 253 to 262 (AQKHQSELAD) are Extracellular-facing. A helical membrane pass occupies residues 263–283 (IIGMITELMYPSVHSCILILG). Residues 284–329 (NSKLKQTSLCMLRHLRCRLKGENITIAYSNQITSFCVFCVANKSMR) lie on the Cytoplasmic side of the membrane.

It belongs to the G-protein coupled receptor T2R family.

It is found in the membrane. In terms of biological role, putative taste receptor which may play a role in the perception of bitterness. This chain is Taste receptor type 2 member 102, found in Mus musculus (Mouse).